The primary structure comprises 160 residues: Transcriptional repressor NrdR (160 aa).

The segment covering 1–11 (MRCPSCNSLDT) has biased composition (polar residues). A disordered region spans residues 1–20 (MRCPSCNSLDTQVKDSRPTE). Residues 3 to 34 (CPSCNSLDTQVKDSRPTEDSAVIRRRRVCMAC) fold into a zinc finger. Residues 49–139 (LTVIKRNGRR…VYRNFREAKD (91 aa)) enclose the ATP-cone domain.

The protein belongs to the NrdR family. Zn(2+) serves as cofactor.

Negatively regulates transcription of bacterial ribonucleotide reductase nrd genes and operons by binding to NrdR-boxes. This chain is Transcriptional repressor NrdR, found in Nitrobacter winogradskyi (strain ATCC 25391 / DSM 10237 / CIP 104748 / NCIMB 11846 / Nb-255).